Here is a 292-residue protein sequence, read N- to C-terminus: Fat storage-inducing transmembrane protein 1 (292 aa).

The Lumenal segment spans residues 1–18 (MERGPTVGAGLGAGTRVR). A helical transmembrane segment spans residues 19–39 (ALLGCLVKVLLWVASALLYFG). Over 40 to 54 (SEQAARLLGSPCLRR) the chain is Cytoplasmic. The helical transmembrane segment at 55–75 (LYHAWLAAVVIFGPLLQFHVN) threads the bilayer. Residues 76–94 (SRTIFASHGNFFNIKFVNS) lie on the Lumenal side of the membrane. The helical transmembrane segment at 95–115 (AWGWTCTFLGGFVLLVVFLAT) threads the bilayer. Residues 116–141 (RRVAVTARHLSRLVVGAAVWRGAGRA) lie on the Cytoplasmic side of the membrane. Residues 142 to 162 (FLLIEDLTGSCFEPLPQGLLL) form a helical membrane-spanning segment. Residues 163–187 (HELPDRKSCLAAGHQWRGYTVSSHT) lie on the Lumenal side of the membrane. Residue His186 is part of the active site. A helical transmembrane segment spans residues 188 to 208 (FLLTFCCLLMAEEAAVFAKYL). Topologically, residues 209–220 (AHGLPAGAPLRL) are cytoplasmic. A helical transmembrane segment spans residues 221–241 (VFLLNVLLLGLWNFLLLCTVI). At 242–249 (YFHQYTHK) the chain is on the lumenal side. The active site involves His244. The chain crosses the membrane as a helical span at residues 250-270 (VVGAAVGTFAWYLTYGSWYHQ). Topologically, residues 271–292 (PWSPGIPGHGLFPRSRSMRKHN) are cytoplasmic.

The protein belongs to the FIT family. FIT1 subfamily. As to expression, predominantly expressed in skeletal muscle and at lower levels in the heart (at protein level). In the heart, mRNA expression levels do not correlate well with protein levels, suggesting post-transcriptional regulation in this organ.

Its subcellular location is the endoplasmic reticulum membrane. Its function is as follows. Plays an important role in the formation of lipid droplets (LDs) which are storage organelles at the center of lipid and energy homeostasis. Directly binds to diacylglycerol (DAGs) and triacylglycerol. The sequence is that of Fat storage-inducing transmembrane protein 1 from Mus musculus (Mouse).